Consider the following 638-residue polypeptide: MVVSADPLSSERAEMNILEINQELRSQLAESNQQFRDLKEKFLITQATAYSLANQLKKYKCEEYKDIIDSVLRDELQSMEKLAEKLRQAEELRQYKALVHSQAKELTQLREKLREGRDASRWLNKHLKTLLTPDDPDKSQGQDLREQLAEGHRLAEHLVHKLSPENDEDEDEDEDDKDEEVEKVQESPAPREVQKTEEKEVPQDSLEECAVTCSNSHNPSNSNQPHRSTKITFKEHEVDSALVVESEHPHDEEEEALNIPPENQNDHEEEEGKAPVPPRHHDKSNSYRHREVSFLALDEQKVCSAQDVARDYSNPKWDETSLGFLEKQSDLEEVKGQETVAPRLSRGPLRVDKHEIPQESLDGCCLTPSILPDLTPSYHPYWSTLYSFEDKQVSLALVDKIKKDQEEIEDQSPPCPRLSQELPEVKEQEVPEDSVNEVYLTPSVHHDVSDCHQPYSSTLSSLEDQLACSALDVASPTEAACPQGTWSGDLSHHQSEVQVSQAQLEPSTLVPSCLRLQLDQGFHCGNGLAQRGLSSTTCSFSANADSGNQWPFQELVLEPSLGMKNPPQLEDDALEGSASNTQGRQVTGRIRASLVLILKTIRRRLPFSKWRLAFRFAGPHAESAEIPNTAGRTQRMAG.

Coiled coils occupy residues 10 to 43 (SERA…EKFL) and 69 to 115 (DSVL…KLRE). The disordered stretch occupies residues 157-285 (HLVHKLSPEN…VPPRHHDKSN (129 aa)). The segment covering 165–179 (ENDEDEDEDEDDKDE) has biased composition (acidic residues). The Olduvai 1 domain maps to 174 to 261 (EDDKDEEVEK…EEEEALNIPP (88 aa)). A compositionally biased stretch (basic and acidic residues) spans 192 to 202 (EVQKTEEKEVP). Low complexity predominate over residues 214 to 226 (SNSHNPSNSNQPH). Composition is skewed to basic and acidic residues over residues 232–251 (TFKE…HPHD) and 264–273 (QNDHEEEEGK). Olduvai domains are found at residues 326-399 (EKQS…ALVD) and 400-503 (KIKK…SQAQ). The disordered stretch occupies residues 562–584 (GMKNPPQLEDDALEGSASNTQGR).

This sequence belongs to the NBPF family. In terms of tissue distribution, expressed in testis.

The protein resides in the cytoplasm. This is NBPF family member NBPF4 from Homo sapiens (Human).